The following is an 854-amino-acid chain: Protein translocase subunit SecA (854 aa).

ATP contacts are provided by residues Gln81, 99-103 (GEGKT), and Asp487.

Belongs to the SecA family. As to quaternary structure, monomer and homodimer. Part of the essential Sec protein translocation apparatus which comprises SecA, SecYEG and auxiliary proteins SecDF. Other proteins may also be involved.

It localises to the cell membrane. The protein resides in the cytoplasm. It catalyses the reaction ATP + H2O + cellular proteinSide 1 = ADP + phosphate + cellular proteinSide 2.. In terms of biological role, part of the Sec protein translocase complex. Interacts with the SecYEG preprotein conducting channel. Has a central role in coupling the hydrolysis of ATP to the transfer of proteins into and across the cell membrane, serving as an ATP-driven molecular motor driving the stepwise translocation of polypeptide chains across the membrane. The chain is Protein translocase subunit SecA from Mycoplasma mobile (strain ATCC 43663 / 163K / NCTC 11711) (Mesomycoplasma mobile).